The chain runs to 222 residues: MDSLAISPRKLRSDLYSYSYQDDSNTVPLVISVLSSLIERTLARNERISRSYGGFGKTRVFDCREIPDMTIQSYLERIFRYTKAGPSVYVVAYVYIDRFCQNNQGFRISLTNVHRLLITTIMIASKYVEDMNYKNSYFAKVGGLETEDLNNLELEFLFLMGFKLHVNVSVFESYCCHLEREVSIGGGYQIEKALRCAEEIKSRQIVQDPKHHHHHQFSRIML.

The protein belongs to the cyclin family. Cyclin U/P subfamily. In terms of assembly, interacts with CDKA-1. In terms of tissue distribution, expressed in roots, stems and flowers. Expressed in the shoot apex, leaf primordia and young leaves.

This is Cyclin-U2-1 (CYCU2-1) from Arabidopsis thaliana (Mouse-ear cress).